A 154-amino-acid polypeptide reads, in one-letter code: Ribonuclease H (154 aa).

The 142-residue stretch at 5–146 folds into the RNase H type-1 domain; sequence EQNIVYLYCD…ADELANRGID (142 aa). Asp-14, Glu-52, Asp-74, and Asp-138 together coordinate Mg(2+).

The protein belongs to the RNase H family. Monomer. Requires Mg(2+) as cofactor.

Its subcellular location is the cytoplasm. It catalyses the reaction Endonucleolytic cleavage to 5'-phosphomonoester.. Endonuclease that specifically degrades the RNA of RNA-DNA hybrids. This chain is Ribonuclease H, found in Coxiella burnetii (strain CbuK_Q154) (Coxiella burnetii (strain Q154)).